Consider the following 457-residue polypeptide: Oxygen-independent coproporphyrinogen III oxidase (457 aa).

A Radical SAM core domain is found at Leu47–Leu279. Tyr56 is an S-adenosyl-L-methionine binding site. The [4Fe-4S] cluster site is built by Cys62 and Cys66. Phe68 contacts S-adenosyl-L-methionine. Residue Cys69 participates in [4Fe-4S] cluster binding. Residues Gly113, Gly114–Thr115, Glu147, Gln174, Arg186, Asp211, Ala245, and Ile331 each bind S-adenosyl-L-methionine.

It belongs to the anaerobic coproporphyrinogen-III oxidase family. Monomer. [4Fe-4S] cluster is required as a cofactor.

Its subcellular location is the cytoplasm. It catalyses the reaction coproporphyrinogen III + 2 S-adenosyl-L-methionine = protoporphyrinogen IX + 2 5'-deoxyadenosine + 2 L-methionine + 2 CO2. It participates in porphyrin-containing compound metabolism; protoporphyrin-IX biosynthesis; protoporphyrinogen-IX from coproporphyrinogen-III (AdoMet route): step 1/1. Functionally, involved in the heme biosynthesis. Catalyzes the anaerobic oxidative decarboxylation of propionate groups of rings A and B of coproporphyrinogen III to yield the vinyl groups in protoporphyrinogen IX. In Helicobacter pylori (strain ATCC 700392 / 26695) (Campylobacter pylori), this protein is Oxygen-independent coproporphyrinogen III oxidase (hemN).